The primary structure comprises 96 residues: MAQIKLTPEELRSSAQKYTAGSQQVTEVLNLLTQEQAVIDENWDGSTFDSFEAQFNELSPKITEFAQLLEDINQQLLKVADIIEQTDADIASQISG.

This sequence belongs to the WXG100 family. sagEsxA-like subfamily. As to quaternary structure, homodimer.

The polypeptide is ESAT-6-like protein SAG1039 (Streptococcus agalactiae serotype V (strain ATCC BAA-611 / 2603 V/R)).